The primary structure comprises 507 residues: Tabersonine/lochnericine 19-hydroxylase (507 aa).

The helical transmembrane segment at 8 to 28 threads the bilayer; sequence FFVLLLPFFIGIAFIYKLWNF. N-linked (GlcNAc...) asparagine glycosylation is present at Asn167. A heme-binding site is contributed by Cys447.

This sequence belongs to the cytochrome P450 family. Heme serves as cofactor. As to expression, confined to roots.

Its subcellular location is the endoplasmic reticulum membrane. It catalyses the reaction (-)-tabersonine + reduced [NADPH--hemoprotein reductase] + O2 = (-)-(R)-19-hydroxytabersonine + oxidized [NADPH--hemoprotein reductase] + H2O + H(+). The enzyme catalyses lochnericine + reduced [NADPH--hemoprotein reductase] + O2 = horhammericine + oxidized [NADPH--hemoprotein reductase] + H2O + H(+). It carries out the reaction (-)-vincadifformine + reduced [NADPH--hemoprotein reductase] + O2 = (-)-minovincinine + oxidized [NADPH--hemoprotein reductase] + H2O + H(+). It participates in alkaloid biosynthesis. Its function is as follows. Component of the monoterpenoid indole alkaloids (MIAs, e.g. echitovenine, tabersonine, lochnericine, 19-hydroxytabersonine and horhammericine) biosynthetic pathway; MIAs are used in cancer treatment and other medical applications. Cytochrome P450 catalyzing the conversion of (-)-tabersonine to 19-hydroxytabersonine, of lochnericine to horhammericine and of (-)-vincadifformine to (-)-minovincinine. In Catharanthus roseus (Madagascar periwinkle), this protein is Tabersonine/lochnericine 19-hydroxylase.